The following is a 571-amino-acid chain: Decapping 5-like protein (571 aa).

Positions 1–17 (MASESSQSSSPSSSQPP) are enriched in low complexity. 4 disordered regions span residues 1 to 27 (MASE…SPGN), 102 to 141 (LQVN…ISGY), 159 to 187 (LSSK…GSLT), and 258 to 305 (SQVV…SEAQ). The 84-residue stretch at 25 to 108 (PGNNVGDTFI…IKDLQVNPSP (84 aa)) folds into the Sm domain. Polar residues-rich tracts occupy residues 104 to 138 (VNPS…SSPI) and 167 to 187 (TQHS…GSLT). Low complexity predominate over residues 264 to 279 (SPDVSSNQSYSSNPSP). Positions 293-305 (SVSSNLSPPSEAQ) are enriched in polar residues. The DFDF domain occupies 419–455 (RIPSSSIEYTEEFDFEAMNEKFKKSELWGYLGRNNQR). Residues 474 to 489 (PAYNKDDFFDTISCNQ) carry the FFD box motif. Positions 498–518 (QQHNQFPEHMRQVPEAFGNNF) match the TFG box motif.

Belongs to the LSM14 family. In terms of assembly, homodimer. Component of the decapping complex.

It is found in the cytoplasm. The protein localises to the P-body. In terms of biological role, as a component of the decapping complex, involved in the degradation of mRNAs. Promotes P-body formation. Translational repressor. In Arabidopsis thaliana (Mouse-ear cress), this protein is Decapping 5-like protein (DCP5-L).